A 124-amino-acid polypeptide reads, in one-letter code: Fluoride-specific ion channel FluC 2 (124 aa).

Transmembrane regions (helical) follow at residues 1-21 (MSDI…RFQI), 34-54 (FLIL…LSLV), 66-86 (LILF…SFVY), and 103-123 (LFII…FLGT). Na(+)-binding residues include Gly76 and Ser79.

This sequence belongs to the fluoride channel Fluc/FEX (TC 1.A.43) family.

The protein resides in the cell inner membrane. The catalysed reaction is fluoride(in) = fluoride(out). With respect to regulation, na(+) is not transported, but it plays an essential structural role and its presence is essential for fluoride channel function. Fluoride-specific ion channel. Important for reducing fluoride concentration in the cell, thus reducing its toxicity. This is Fluoride-specific ion channel FluC 2 from Prochlorococcus marinus (strain NATL2A).